Reading from the N-terminus, the 314-residue chain is 2-desacetyl-2-hydroxyethyl bacteriochlorophyllide A dehydrogenase (314 aa).

It participates in porphyrin-containing compound metabolism; bacteriochlorophyll biosynthesis (light-independent). In terms of biological role, this protein catalyzes the penultimate step in bacteriochlorophyll a biosynthesis. This chain is 2-desacetyl-2-hydroxyethyl bacteriochlorophyllide A dehydrogenase (bchC), found in Rhodobacter capsulatus (strain ATCC BAA-309 / NBRC 16581 / SB1003).